The following is a 37-amino-acid chain: Large ribosomal subunit protein bL36 (37 aa).

The protein belongs to the bacterial ribosomal protein bL36 family.

In Azoarcus sp. (strain BH72), this protein is Large ribosomal subunit protein bL36.